The chain runs to 145 residues: 3-hydroxyacyl-[acyl-carrier-protein] dehydratase FabZ (145 aa).

H51 is an active-site residue.

It belongs to the thioester dehydratase family. FabZ subfamily.

It is found in the cytoplasm. The enzyme catalyses a (3R)-hydroxyacyl-[ACP] = a (2E)-enoyl-[ACP] + H2O. Its function is as follows. Involved in unsaturated fatty acids biosynthesis. Catalyzes the dehydration of short chain beta-hydroxyacyl-ACPs and long chain saturated and unsaturated beta-hydroxyacyl-ACPs. The chain is 3-hydroxyacyl-[acyl-carrier-protein] dehydratase FabZ from Staphylococcus epidermidis (strain ATCC 35984 / DSM 28319 / BCRC 17069 / CCUG 31568 / BM 3577 / RP62A).